A 252-amino-acid chain; its full sequence is 2-succinyl-6-hydroxy-2,4-cyclohexadiene-1-carboxylate synthase (252 aa).

The protein belongs to the AB hydrolase superfamily. MenH family. As to quaternary structure, monomer.

It catalyses the reaction 5-enolpyruvoyl-6-hydroxy-2-succinyl-cyclohex-3-ene-1-carboxylate = (1R,6R)-6-hydroxy-2-succinyl-cyclohexa-2,4-diene-1-carboxylate + pyruvate. The protein operates within quinol/quinone metabolism; 1,4-dihydroxy-2-naphthoate biosynthesis; 1,4-dihydroxy-2-naphthoate from chorismate: step 3/7. It functions in the pathway quinol/quinone metabolism; menaquinone biosynthesis. In terms of biological role, catalyzes a proton abstraction reaction that results in 2,5-elimination of pyruvate from 2-succinyl-5-enolpyruvyl-6-hydroxy-3-cyclohexene-1-carboxylate (SEPHCHC) and the formation of 2-succinyl-6-hydroxy-2,4-cyclohexadiene-1-carboxylate (SHCHC). In Salmonella typhi, this protein is 2-succinyl-6-hydroxy-2,4-cyclohexadiene-1-carboxylate synthase.